The primary structure comprises 417 residues: D-amino acid dehydrogenase (417 aa).

Residue 3-17 (VIVLGSGVIGVTAAW) coordinates FAD.

Belongs to the DadA oxidoreductase family. It depends on FAD as a cofactor.

It carries out the reaction a D-alpha-amino acid + A + H2O = a 2-oxocarboxylate + AH2 + NH4(+). Its pathway is amino-acid degradation; D-alanine degradation; NH(3) and pyruvate from D-alanine: step 1/1. Its function is as follows. Oxidative deamination of D-amino acids. The polypeptide is D-amino acid dehydrogenase (Methylobacillus flagellatus (strain ATCC 51484 / DSM 6875 / VKM B-1610 / KT)).